The primary structure comprises 373 residues: Spermidine/putrescine import ATP-binding protein PotA (373 aa).

Positions 5–235 constitute an ABC transporter domain; it reads IVFEHVSKKF…PKSSFVADFI (231 aa). 37-44 is a binding site for ATP; sequence GPSGCGKT.

It belongs to the ABC transporter superfamily. Spermidine/putrescine importer (TC 3.A.1.11.1) family. The complex is composed of two ATP-binding proteins (PotA), two transmembrane proteins (PotB and PotC) and a solute-binding protein (PotD).

Its subcellular location is the cell inner membrane. It carries out the reaction ATP + H2O + polyamine-[polyamine-binding protein]Side 1 = ADP + phosphate + polyamineSide 2 + [polyamine-binding protein]Side 1.. Part of the ABC transporter complex PotABCD involved in spermidine/putrescine import. Responsible for energy coupling to the transport system. The polypeptide is Spermidine/putrescine import ATP-binding protein PotA (Protochlamydia amoebophila (strain UWE25)).